A 255-amino-acid polypeptide reads, in one-letter code: Endonuclease V (255 aa).

The Mg(2+) site is built by D42 and D110.

The protein belongs to the endonuclease V family. The cofactor is Mg(2+).

The protein resides in the cytoplasm. It catalyses the reaction Endonucleolytic cleavage at apurinic or apyrimidinic sites to products with a 5'-phosphate.. In terms of biological role, DNA repair enzyme involved in the repair of deaminated bases. Selectively cleaves double-stranded DNA at the second phosphodiester bond 3' to a deoxyinosine leaving behind the intact lesion on the nicked DNA. The sequence is that of Endonuclease V from Aeropyrum pernix (strain ATCC 700893 / DSM 11879 / JCM 9820 / NBRC 100138 / K1).